The chain runs to 83 residues: Cytochrome b559 subunit alpha (83 aa).

Residues 22–36 (VIHAVTLPAIFLAGF) traverse the membrane as a helical segment. Histidine 24 lines the heme pocket.

The protein belongs to the PsbE/PsbF family. Heterodimer of an alpha subunit and a beta subunit. PSII is composed of 1 copy each of membrane proteins PsbA, PsbB, PsbC, PsbD, PsbE, PsbF, PsbH, PsbI, PsbJ, PsbK, PsbL, PsbM, PsbT, PsbX, PsbY, PsbZ, Psb30/Ycf12, peripheral proteins PsbO, CyanoQ (PsbQ), PsbU, PsbV and a large number of cofactors. It forms dimeric complexes. It depends on heme b as a cofactor.

It is found in the cellular thylakoid membrane. Its function is as follows. This b-type cytochrome is tightly associated with the reaction center of photosystem II (PSII). PSII is a light-driven water:plastoquinone oxidoreductase that uses light energy to abstract electrons from H(2)O, generating O(2) and a proton gradient subsequently used for ATP formation. It consists of a core antenna complex that captures photons, and an electron transfer chain that converts photonic excitation into a charge separation. The polypeptide is Cytochrome b559 subunit alpha (Synechococcus sp. (strain RCC307)).